A 289-amino-acid polypeptide reads, in one-letter code: MSRLSHQDLRRGFRELIASNSCYHTASVFDPMSARIAADLGFEVGILGGSVASLQVLAAPDFALITLSEFAEQATRIGRVAQLPVIADADHGYGNALNVMRTVVELERAGIAALTIEDTLLPAQFGRKSTDLISVAEGVGKIRAALEARVDPELAIIARTNAGILPVQEIISRTQQYERAGADAICMVGIRDFEQLEQISEHLSVPLMLVTYGNPALRDDARLAELGVKIAVDGHAAYFAAIKATYDCLREQRQIFTQASDLSATELAHTYTQPEEYIVWAKEFMSVKE.

S50 is a substrate binding site. A Mg(2+)-binding site is contributed by D88. Residues R159 and H235 each contribute to the substrate site.

This sequence belongs to the isocitrate lyase/PEP mutase superfamily. Oxaloacetate decarboxylase family. As to quaternary structure, homotetramer; dimer of dimers. Requires Mg(2+) as cofactor.

The catalysed reaction is oxaloacetate + H(+) = pyruvate + CO2. Functionally, catalyzes the decarboxylation of oxaloacetate into pyruvate. Seems to play a role in maintaining cellular concentrations of bicarbonate and pyruvate. In Pseudomonas fluorescens (strain ATCC BAA-477 / NRRL B-23932 / Pf-5), this protein is Oxaloacetate decarboxylase.